The primary structure comprises 906 residues: Formin-like protein 16 (906 aa).

An N-terminal signal peptide occupies residues 1 to 28 (MAPAPSPTPLPLFLLLLLLVGVAPLAAA). The tract at residues 34–76 (QTRFPSTRTPAFATPPPITSPSPSPGTPTATPSSSPPSSSGKR) is disordered. Pro residues predominate over residues 46-59 (ATPPPITSPSPSPG). Residues 60 to 73 (TPTATPSSSPPSSS) show a composition bias toward low complexity. The chain crosses the membrane as a helical span at residues 81 to 101 (VAVVSTALSSFAVSGLAFFLF). 6 disordered regions span residues 113–149 (AGGA…VDEN), 161–223 (KEGD…SLDS), 250–404 (AYAR…DQQA), 451–474 (RKTK…GRSN), 677–702 (GSLA…REER), and 834–906 (LQQQ…SDEE). The span at 114–128 (GGAGQHYGGAQGGAL) shows a compositional bias: gly residues. A compositionally biased stretch (pro residues) spans 174–185 (SRRPPQPPPPRP). A compositionally biased stretch (basic and acidic residues) spans 186–196 (YRAERRQDAHE). The span at 270 to 294 (SPSPAPAPAARPASPSPSLPLPPGR) shows a compositional bias: pro residues. The span at 295-310 (ESPSRPQSIAAAAVAS) shows a compositional bias: low complexity. Over residues 311-383 (PAPPPPPPPK…KGGPPPPPPK (73 aa)) the composition is skewed to pro residues. Residues 396–849 (PTGSADQQAK…PTPPPSSSQP (454 aa)) form the FH2 domain. 2 stretches are compositionally biased toward polar residues: residues 463 to 474 (GGSTSAGLGRSN) and 677 to 697 (GSLA…SQGP). A compositionally biased stretch (low complexity) spans 847-866 (SQPAAPAATTKGAADDAPAP).

The protein belongs to the formin-like family. Class-I subfamily.

It is found in the membrane. The chain is Formin-like protein 16 (FH16) from Oryza sativa subsp. japonica (Rice).